The primary structure comprises 265 residues: 3-methyl-2-oxobutanoate hydroxymethyltransferase (265 aa).

Positions 43 and 82 each coordinate Mg(2+). 3-methyl-2-oxobutanoate-binding positions include 43-44, Asp-82, and Lys-111; that span reads DS. Glu-113 lines the Mg(2+) pocket. The Proton acceptor role is filled by Glu-180.

Belongs to the PanB family. Homodecamer; pentamer of dimers. It depends on Mg(2+) as a cofactor.

It localises to the cytoplasm. The catalysed reaction is 3-methyl-2-oxobutanoate + (6R)-5,10-methylene-5,6,7,8-tetrahydrofolate + H2O = 2-dehydropantoate + (6S)-5,6,7,8-tetrahydrofolate. Its pathway is cofactor biosynthesis; (R)-pantothenate biosynthesis; (R)-pantoate from 3-methyl-2-oxobutanoate: step 1/2. Its function is as follows. Catalyzes the reversible reaction in which hydroxymethyl group from 5,10-methylenetetrahydrofolate is transferred onto alpha-ketoisovalerate to form ketopantoate. This chain is 3-methyl-2-oxobutanoate hydroxymethyltransferase, found in Francisella tularensis subsp. mediasiatica (strain FSC147).